A 269-amino-acid chain; its full sequence is 4-hydroxy-tetrahydrodipicolinate reductase (269 aa).

Residues 11 to 16 (GASGRM) and E37 contribute to the NAD(+) site. Residue R38 coordinates NADP(+). NAD(+) is bound by residues 101–103 (GTT) and 125–128 (AGNM). The Proton donor/acceptor role is filled by H158. Position 159 (H159) interacts with (S)-2,3,4,5-tetrahydrodipicolinate. K162 (proton donor) is an active-site residue. 168–169 (GT) provides a ligand contact to (S)-2,3,4,5-tetrahydrodipicolinate.

It belongs to the DapB family.

The protein localises to the cytoplasm. The enzyme catalyses (S)-2,3,4,5-tetrahydrodipicolinate + NAD(+) + H2O = (2S,4S)-4-hydroxy-2,3,4,5-tetrahydrodipicolinate + NADH + H(+). The catalysed reaction is (S)-2,3,4,5-tetrahydrodipicolinate + NADP(+) + H2O = (2S,4S)-4-hydroxy-2,3,4,5-tetrahydrodipicolinate + NADPH + H(+). Its pathway is amino-acid biosynthesis; L-lysine biosynthesis via DAP pathway; (S)-tetrahydrodipicolinate from L-aspartate: step 4/4. Its function is as follows. Catalyzes the conversion of 4-hydroxy-tetrahydrodipicolinate (HTPA) to tetrahydrodipicolinate. This is 4-hydroxy-tetrahydrodipicolinate reductase from Cereibacter sphaeroides (strain ATCC 17023 / DSM 158 / JCM 6121 / CCUG 31486 / LMG 2827 / NBRC 12203 / NCIMB 8253 / ATH 2.4.1.) (Rhodobacter sphaeroides).